Here is a 225-residue protein sequence, read N- to C-terminus: Small ribosomal subunit protein eS1 (225 aa).

This sequence belongs to the eukaryotic ribosomal protein eS1 family.

This chain is Small ribosomal subunit protein eS1, found in Methanococcus maripaludis (strain C6 / ATCC BAA-1332).